We begin with the raw amino-acid sequence, 191 residues long: Endoribonuclease YbeY (191 aa).

Positions 122, 126, and 132 each coordinate Zn(2+). Positions 164–191 (QPKPSGPKAFPDAAERAELDKEVPGGGI) are disordered. Basic and acidic residues predominate over residues 176-191 (AAERAELDKEVPGGGI).

It belongs to the endoribonuclease YbeY family. Zn(2+) is required as a cofactor.

Its subcellular location is the cytoplasm. Single strand-specific metallo-endoribonuclease involved in late-stage 70S ribosome quality control and in maturation of the 3' terminus of the 16S rRNA. This is Endoribonuclease YbeY from Corynebacterium aurimucosum (strain ATCC 700975 / DSM 44827 / CIP 107346 / CN-1) (Corynebacterium nigricans).